The sequence spans 398 residues: Probable peptidoglycan glycosyltransferase FtsW (398 aa).

The Cytoplasmic portion of the chain corresponds to 1-25 (MCYGGTAMMAFADIKEALTPKPSAQ). The chain crosses the membrane as a helical span at residues 26–46 (LYDVPLLYCMLMLMGVGFVMV). The Periplasmic segment spans residues 47-69 (TSASMPTADRLFGNIYHFTIRHG). The helical transmembrane segment at 70–90 (IFLALSFCLFWITTSVPMSWW) threads the bilayer. Position 91 (lysine 91) is a topological domain, cytoplasmic. Residues 92–112 (KANPYLLLVGLGLLLIVLIVG) traverse the membrane as a helical segment. Topologically, residues 113-120 (REVNGSTR) are periplasmic. The helical transmembrane segment at 121-141 (WIPIGPFNIQASELAKLFFFS) threads the bilayer. The Cytoplasmic portion of the chain corresponds to 142–156 (YISGYLVRKRSEVQE). A helical transmembrane segment spans residues 157–177 (NIKGFIKPILVFAAYAGLILM). The Periplasmic portion of the chain corresponds to 178–179 (QP). The helical transmembrane segment at 180-200 (DLGTVVVMFVTTVGLLFLAGA) threads the bilayer. Lysine 201 is a topological domain (cytoplasmic). The helical transmembrane segment at 202-222 (LWQFFVLILTGVALVIGLIVL) threads the bilayer. Topologically, residues 223–289 (EPYRMARVIG…DFIFAVIAEE (67 aa)) are periplasmic. A helical membrane pass occupies residues 290-312 (LGFVGVSSILIVLGTLVFRALLI). Residues 313-324 (GQNALKNGKEYE) lie on the Cytoplasmic side of the membrane. A helical membrane pass occupies residues 325–345 (GYLALAIGIWFAFQTMVNVGA). Residues 346–356 (SAGILPTKGLT) lie on the Periplasmic side of the membrane. A helical membrane pass occupies residues 357 to 377 (LPFISYGGSSLLMMTIAAGIL). Topologically, residues 378 to 398 (LRVDFETKMATKQATSGGAKR) are cytoplasmic.

It belongs to the SEDS family. FtsW subfamily.

The protein resides in the cell inner membrane. It carries out the reaction [GlcNAc-(1-&gt;4)-Mur2Ac(oyl-L-Ala-gamma-D-Glu-L-Lys-D-Ala-D-Ala)](n)-di-trans,octa-cis-undecaprenyl diphosphate + beta-D-GlcNAc-(1-&gt;4)-Mur2Ac(oyl-L-Ala-gamma-D-Glu-L-Lys-D-Ala-D-Ala)-di-trans,octa-cis-undecaprenyl diphosphate = [GlcNAc-(1-&gt;4)-Mur2Ac(oyl-L-Ala-gamma-D-Glu-L-Lys-D-Ala-D-Ala)](n+1)-di-trans,octa-cis-undecaprenyl diphosphate + di-trans,octa-cis-undecaprenyl diphosphate + H(+). The protein operates within cell wall biogenesis; peptidoglycan biosynthesis. Functionally, peptidoglycan polymerase that is essential for cell division. This chain is Probable peptidoglycan glycosyltransferase FtsW, found in Pseudoalteromonas translucida (strain TAC 125).